A 236-amino-acid chain; its full sequence is MSFLKSFPPPGSADGLRLQQPDTEAVLNGKGLGTGTLYIAESRLSWLDGSGLGFSLEYPTISLHAVSRDPNAYPQEHLYVMVNAKLGEESKEPPSDEDEEDNDDIEPISEFRFVPSDKSALEAMFTAMCECQALHPDPEDEDSDDYDGEEYDVEAHEQGQGDIPTFYTYEEGLSHLTAEGQATLERLEGMLSQSVSSQYNMAGVRTEDSVRNYEDGMEVETTPTVAGQFEDADVDH.

Position 2 is an N-acetylserine (Ser-2). Positions 88–109 (EESKEPPSDEDEEDNDDIEPIS) are disordered. Ser-95, Ser-143, Ser-192, Ser-194, Ser-197, and Ser-209 each carry phosphoserine. Acidic residues predominate over residues 95–107 (SDEDEEDNDDIEP). Phosphothreonine is present on Thr-222.

It belongs to the pICln (TC 1.A.47) family. Component of the methylosome, a 20S complex containing at least PRMT5/SKB1, WDR77/MEP50 and CLNS1A/pICln. May mediate SNRPD1 and SNRPD3 methylation. Forms a 6S pICln-Sm complex composed of CLNS1A/pICln, SNRPD1, SNRPD2, SNRPE, SNRPF and SNRPG; ring-like structure where CLNS1A/pICln mimics additional Sm proteins and which is unable to assemble into the core snRNP. Interacts with LSM10 and LSM11.

Its subcellular location is the cytoplasm. It is found in the cytosol. The protein resides in the nucleus. The protein localises to the cytoskeleton. Functionally, involved in both the assembly of spliceosomal snRNPs and the methylation of Sm proteins. Chaperone that regulates the assembly of spliceosomal U1, U2, U4 and U5 small nuclear ribonucleoproteins (snRNPs), the building blocks of the spliceosome, and thereby plays an important role in the splicing of cellular pre-mRNAs. Most spliceosomal snRNPs contain a common set of Sm proteins SNRPB, SNRPD1, SNRPD2, SNRPD3, SNRPE, SNRPF and SNRPG that assemble in a heptameric protein ring on the Sm site of the small nuclear RNA to form the core snRNP (Sm core). In the cytosol, the Sm proteins SNRPD1, SNRPD2, SNRPE, SNRPF and SNRPG are trapped in an inactive 6S pICln-Sm complex by the chaperone CLNS1A that controls the assembly of the core snRNP. Dissociation by the SMN complex of CLNS1A from the trapped Sm proteins and their transfer to an SMN-Sm complex triggers the assembly of core snRNPs and their transport to the nucleus. This is Methylosome subunit pICln (Clns1a) from Mus musculus (Mouse).